Reading from the N-terminus, the 361-residue chain is Ferredoxin--NADP reductase 1 (361 aa).

Asp44, Gln52, Tyr57, Ala97, Phe142, Asp308, and Ser349 together coordinate FAD.

It belongs to the ferredoxin--NADP reductase type 2 family. As to quaternary structure, homodimer. Requires FAD as cofactor.

The catalysed reaction is 2 reduced [2Fe-2S]-[ferredoxin] + NADP(+) + H(+) = 2 oxidized [2Fe-2S]-[ferredoxin] + NADPH. The protein is Ferredoxin--NADP reductase 1 of Cupriavidus necator (strain ATCC 17699 / DSM 428 / KCTC 22496 / NCIMB 10442 / H16 / Stanier 337) (Ralstonia eutropha).